We begin with the raw amino-acid sequence, 374 residues long: Putative glutamate--cysteine ligase 2 (374 aa).

This sequence belongs to the glutamate--cysteine ligase type 2 family. YbdK subfamily.

It carries out the reaction L-cysteine + L-glutamate + ATP = gamma-L-glutamyl-L-cysteine + ADP + phosphate + H(+). ATP-dependent carboxylate-amine ligase which exhibits weak glutamate--cysteine ligase activity. This is Putative glutamate--cysteine ligase 2 from Verminephrobacter eiseniae (strain EF01-2).